We begin with the raw amino-acid sequence, 245 residues long: Flavin-dependent thymidylate synthase (245 aa).

The region spanning 6-220 is the ThyX domain; that stretch reads PRVELLAHTP…PELFAHAGAK (215 aa). FAD is bound by residues Ser65, 89–91, and Gln97; that span reads RHR. DUMP contacts are provided by residues 86–89, 97–101, and Arg159; these read QLVR and QQSQR. The ThyX motif motif lies at 89 to 99; it reads RHRIASFSQQS. FAD-binding positions include 175–177 and His181; that span reads NCR. DUMP is bound at residue Arg186. The active-site Involved in ionization of N3 of dUMP, leading to its activation is Arg186.

The protein belongs to the thymidylate synthase ThyX family. Homotetramer. FAD serves as cofactor.

It carries out the reaction dUMP + (6R)-5,10-methylene-5,6,7,8-tetrahydrofolate + NADPH + H(+) = dTMP + (6S)-5,6,7,8-tetrahydrofolate + NADP(+). The protein operates within pyrimidine metabolism; dTTP biosynthesis. In terms of biological role, catalyzes the reductive methylation of 2'-deoxyuridine-5'-monophosphate (dUMP) to 2'-deoxythymidine-5'-monophosphate (dTMP) while utilizing 5,10-methylenetetrahydrofolate (mTHF) as the methyl donor, and NADPH and FADH(2) as the reductant. This Nitratidesulfovibrio vulgaris (strain ATCC 29579 / DSM 644 / CCUG 34227 / NCIMB 8303 / VKM B-1760 / Hildenborough) (Desulfovibrio vulgaris) protein is Flavin-dependent thymidylate synthase.